The chain runs to 143 residues: Transcriptional regulator MraZ (143 aa).

2 consecutive SpoVT-AbrB domains span residues 5 to 47 and 76 to 119; these read TYTP…PREE and TDEQ…DAQA.

It belongs to the MraZ family. In terms of assembly, forms oligomers.

The protein localises to the cytoplasm. It localises to the nucleoid. The sequence is that of Transcriptional regulator MraZ from Rhodococcus opacus (strain B4).